Here is a 634-residue protein sequence, read N- to C-terminus: Nucleoside triphosphatase I (634 aa).

A Helicase ATP-binding domain is found at Phe41–Gly203. Position 54-61 (Gln54–Thr61) interacts with ATP. Residues Asp140–His143 carry the DEXH box motif. In terms of domain architecture, Helicase C-terminal spans Ser355 to Lys531. The interval Asp456–Phe523 is binding to the cap-specific mRNA (nucleoside-2'-O-)-methyltransferase.

Belongs to the helicase family. NPH I subfamily. As to quaternary structure, monomer. Interacts (via C-terminus) with RAP94 (via N-terminus). Interacts with the cap-specific mRNA (nucleoside-2'-O-)-methyltransferase.

The protein resides in the virion. It carries out the reaction a ribonucleoside 5'-triphosphate + H2O = a ribonucleoside 5'-diphosphate + phosphate + H(+). Functionally, DNA-dependent ATPase required for providing the needed energy to achieve the termination of early transcripts. Acts in concert with the RAP94 subunit of the virion RNA polymerase and the capping enzyme/VTF to catalyze release of UUUUUNU-containing nascent RNA from the elongation complex. NPH-I must bind ssDNA in order to exhibit ATPase activity. The polypeptide is Nucleoside triphosphatase I (NPH1) (Homo sapiens (Human)).